A 362-amino-acid chain; its full sequence is Protein-glutamate methylesterase/protein-glutamine glutaminase (362 aa).

Positions 10–127 (RVLVVDDSAF…SLNMHVARDE (118 aa)) constitute a Response regulatory domain. Asp61 bears the 4-aspartylphosphate mark. Residues 173–362 (RLPRRLVLIG…DAITRAVGEG (190 aa)) enclose the CheB-type methylesterase domain. Residues Ser184, His211, and Asp304 contribute to the active site.

This sequence belongs to the CheB family. Post-translationally, phosphorylated by CheA. Phosphorylation of the N-terminal regulatory domain activates the methylesterase activity.

It localises to the cytoplasm. It carries out the reaction [protein]-L-glutamate 5-O-methyl ester + H2O = L-glutamyl-[protein] + methanol + H(+). It catalyses the reaction L-glutaminyl-[protein] + H2O = L-glutamyl-[protein] + NH4(+). Its function is as follows. Involved in chemotaxis. Part of a chemotaxis signal transduction system that modulates chemotaxis in response to various stimuli. Catalyzes the demethylation of specific methylglutamate residues introduced into the chemoreceptors (methyl-accepting chemotaxis proteins or MCP) by CheR. Also mediates the irreversible deamidation of specific glutamine residues to glutamic acid. The sequence is that of Protein-glutamate methylesterase/protein-glutamine glutaminase from Symbiobacterium thermophilum (strain DSM 24528 / JCM 14929 / IAM 14863 / T).